The sequence spans 307 residues: Cytochrome c1 2, heme protein, mitochondrial (307 aa).

A mitochondrion-targeting transit peptide spans 1 to 64 (MVGGGVIRQL…LLSFSTVASA (64 aa)). Residues 65-270 (DEAEHGLECP…EPEMEERKLM (206 aa)) are Mitochondrial intermembrane-facing. A Cytochrome c domain is found at 90-197 (ASIRRGHQVY…NGQNYVFALL (108 aa)). 4 residues coordinate heme c: Cys-103, Cys-106, His-107, and Met-226. Residues 271 to 288 (GFKWIFLLSLALLQAAYY) form a helical membrane-spanning segment. The Mitochondrial matrix portion of the chain corresponds to 289-307 (RRLKWSVLKSRKLVLDVVN).

The protein belongs to the cytochrome c family. As to quaternary structure, component of the ubiquinol-cytochrome c oxidoreductase (cytochrome b-c1 complex, complex III, CIII), a multisubunit enzyme composed of 10 subunits. The complex is composed of 3 respiratory subunits cytochrome b (MT-CYB), cytochrome c1 (CYC1-1 or CYC1-2) and Rieske protein (UCR1-1 or UCR1-2), 2 core protein subunits MPPalpha1 (or MPPalpha2) and MPPB, and 5 low-molecular weight protein subunits QCR7-1 (or QCR7-2), UCRQ-1 (or UCRQ-2), QCR9, UCRY and probably QCR6-1 (or QCR6-2). The complex exists as an obligatory dimer and forms supercomplexes (SCs) in the inner mitochondrial membrane with NADH-ubiquinone oxidoreductase (complex I, CI), resulting in different assemblies (supercomplexes SCI(1)III(2) and SCI(2)III(4)). Binds 1 heme c group covalently per subunit.

It localises to the mitochondrion inner membrane. Functionally, component of the ubiquinol-cytochrome c oxidoreductase, a multisubunit transmembrane complex that is part of the mitochondrial electron transport chain which drives oxidative phosphorylation. The respiratory chain contains 3 multisubunit complexes succinate dehydrogenase (complex II, CII), ubiquinol-cytochrome c oxidoreductase (cytochrome b-c1 complex, complex III, CIII) and cytochrome c oxidase (complex IV, CIV), that cooperate to transfer electrons derived from NADH and succinate to molecular oxygen, creating an electrochemical gradient over the inner membrane that drives transmembrane transport and the ATP synthase. The cytochrome b-c1 complex catalyzes electron transfer from ubiquinol to cytochrome c, linking this redox reaction to translocation of protons across the mitochondrial inner membrane, with protons being carried across the membrane as hydrogens on the quinol. In the process called Q cycle, 2 protons are consumed from the matrix, 4 protons are released into the intermembrane space and 2 electrons are passed to cytochrome c. Cytochrome c1 is a catalytic core subunit containing a c-type heme. It transfers electrons from the [2Fe-2S] iron-sulfur cluster of the Rieske protein to cytochrome c. This chain is Cytochrome c1 2, heme protein, mitochondrial (CYC1-2), found in Arabidopsis thaliana (Mouse-ear cress).